The primary structure comprises 1171 residues: DNA-directed RNA polymerase subunit beta (1171 aa).

This sequence belongs to the RNA polymerase beta chain family. In terms of assembly, the RNAP catalytic core consists of 2 alpha, 1 beta, 1 beta' and 1 omega subunit. When a sigma factor is associated with the core the holoenzyme is formed, which can initiate transcription.

The enzyme catalyses RNA(n) + a ribonucleoside 5'-triphosphate = RNA(n+1) + diphosphate. Functionally, DNA-dependent RNA polymerase catalyzes the transcription of DNA into RNA using the four ribonucleoside triphosphates as substrates. The protein is DNA-directed RNA polymerase subunit beta of Corynebacterium efficiens (strain DSM 44549 / YS-314 / AJ 12310 / JCM 11189 / NBRC 100395).